We begin with the raw amino-acid sequence, 104 residues long: Complex III assembly factor LYRM7 (104 aa).

At S60 the chain carries Phosphoserine.

Belongs to the complex I LYR family. In terms of assembly, interacts with UQCRFS1.

Its subcellular location is the mitochondrion matrix. Functionally, assembly factor required for Rieske Fe-S protein UQCRFS1 incorporation into the cytochrome b-c1 (CIII) complex. Functions as a chaperone, binding to this subunit within the mitochondrial matrix and stabilizing it prior to its translocation and insertion into the late CIII dimeric intermediate within the mitochondrial inner membrane. This chain is Complex III assembly factor LYRM7 (LYRM7), found in Pongo abelii (Sumatran orangutan).